We begin with the raw amino-acid sequence, 387 residues long: 4-hydroxy-3-methylbut-2-en-1-yl diphosphate synthase (flavodoxin) (387 aa).

4 residues coordinate [4Fe-4S] cluster: cysteine 293, cysteine 296, cysteine 328, and glutamate 335.

The protein belongs to the IspG family. The cofactor is [4Fe-4S] cluster.

The catalysed reaction is (2E)-4-hydroxy-3-methylbut-2-enyl diphosphate + oxidized [flavodoxin] + H2O + 2 H(+) = 2-C-methyl-D-erythritol 2,4-cyclic diphosphate + reduced [flavodoxin]. Its pathway is isoprenoid biosynthesis; isopentenyl diphosphate biosynthesis via DXP pathway; isopentenyl diphosphate from 1-deoxy-D-xylulose 5-phosphate: step 5/6. In terms of biological role, converts 2C-methyl-D-erythritol 2,4-cyclodiphosphate (ME-2,4cPP) into 1-hydroxy-2-methyl-2-(E)-butenyl 4-diphosphate. This Treponema denticola (strain ATCC 35405 / DSM 14222 / CIP 103919 / JCM 8153 / KCTC 15104) protein is 4-hydroxy-3-methylbut-2-en-1-yl diphosphate synthase (flavodoxin).